A 256-amino-acid polypeptide reads, in one-letter code: Kallikrein-15 (256 aa).

The signal sequence occupies residues 1–16; the sequence is MWLLLTLSFLLASTAA. A propeptide spans 17 to 21 (activation peptide); that stretch reads QDGDK. In terms of domain architecture, Peptidase S1 spans 22–254; sequence LLEGDECAPH…YLEWIRETMK (233 aa). Cysteines 47 and 63 form a disulfide. Catalysis depends on charge relay system residues His-62 and Asp-106. Disulfide bonds link Cys-138-Cys-215, Cys-180-Cys-194, and Cys-205-Cys-230. Asn-171 carries N-linked (GlcNAc...) asparagine glycosylation. Ser-209 acts as the Charge relay system in catalysis. N-linked (GlcNAc...) asparagine glycosylation occurs at Asn-232.

Belongs to the peptidase S1 family. Kallikrein subfamily. Highest expression in the thyroid gland. Also expressed in the prostate, salivary, and adrenal glands and in the colon testis and kidney.

It is found in the secreted. Its function is as follows. Protease whose physiological substrate is not yet known. The protein is Kallikrein-15 (KLK15) of Homo sapiens (Human).